Consider the following 49-residue polypeptide: uncharacterized protein (49 aa).

Residues 1–22 form the signal peptide; that stretch reads MKLNAFHLVVVVLIVSIFSVSS.

The protein localises to the secreted. This is an uncharacterized protein from Dictyostelium discoideum (Social amoeba).